A 461-amino-acid chain; its full sequence is Chromosomal replication initiator protein DnaA (461 aa).

Residues 1–83 (MTASLWQQCL…LHFAVGRRPT (83 aa)) are domain I, interacts with DnaA modulators. A domain II region spans residues 83–124 (TAATVQMNTAAAPVADVRIGPAITVPSWTSKQDAMPEINHKS). The tract at residues 125-341 (NINETYTFEN…GALNRVIANA (217 aa)) is domain III, AAA+ region. ATP-binding residues include G169, G171, K172, and T173. The segment at 342-461 (RFTGKPINID…YSNLIRTLSS (120 aa)) is domain IV, binds dsDNA.

Belongs to the DnaA family. As to quaternary structure, oligomerizes as a right-handed, spiral filament on DNA at oriC.

It is found in the cytoplasm. Plays an essential role in the initiation and regulation of chromosomal replication. ATP-DnaA binds to the origin of replication (oriC) to initiate formation of the DNA replication initiation complex once per cell cycle. Binds the DnaA box (a 9 base pair repeat at the origin) and separates the double-stranded (ds)DNA. Forms a right-handed helical filament on oriC DNA; dsDNA binds to the exterior of the filament while single-stranded (ss)DNA is stabiized in the filament's interior. The ATP-DnaA-oriC complex binds and stabilizes one strand of the AT-rich DNA unwinding element (DUE), permitting loading of DNA polymerase. After initiation quickly degrades to an ADP-DnaA complex that is not apt for DNA replication. Binds acidic phospholipids. The sequence is that of Chromosomal replication initiator protein DnaA from Tolumonas auensis (strain DSM 9187 / NBRC 110442 / TA 4).